Here is a 162-residue protein sequence, read N- to C-terminus: Troponin C, skeletal muscle (162 aa).

A1 carries the N-acetylalanine modification. 4 EF-hand domains span residues 17-52 (EMIA…LGQT), 53-88 (PTKE…QMKE), 93-128 (KSEE…SGES), and 129-162 (ITDE…EGVQ). The Ca(2+) site is built by D30, D32, D36, E41, D66, D68, S70, T72, E77, D106, N108, D110, Y112, E117, D142, N144, D146, K148, and E153.

The protein belongs to the troponin C family.

Its function is as follows. Troponin is the central regulatory protein of striated muscle contraction. Tn consists of three components: Tn-I which is the inhibitor of actomyosin ATPase, Tn-T which contains the binding site for tropomyosin and Tn-C. The binding of calcium to Tn-C abolishes the inhibitory action of Tn on actin filaments. The chain is Troponin C, skeletal muscle from Pelophylax lessonae (Pool frog).